A 142-amino-acid polypeptide reads, in one-letter code: Hemoglobin subunit alpha-1 (142 aa).

S1 bears the N-acetylserine mark. A Globin domain is found at 1–142 (SLSDKDKAAV…VALALAQRYR (142 aa)). H59 lines the O2 pocket. Position 88 (H88) interacts with heme b.

It belongs to the globin family. In terms of assembly, hb1 is a heterotetramer of two alpha-2 chains and two beta chains. As to expression, red blood cells.

Involved in oxygen transport from gills to the various peripheral tissues. This chain is Hemoglobin subunit alpha-1 (hba1), found in Notothenia neglecta (Yellowbelly rockcod).